The sequence spans 136 residues: Small ribosomal subunit protein uS8c (136 aa).

The protein belongs to the universal ribosomal protein uS8 family. Part of the 30S ribosomal subunit.

The protein resides in the plastid. Its subcellular location is the chloroplast. One of the primary rRNA binding proteins, it binds directly to 16S rRNA central domain where it helps coordinate assembly of the platform of the 30S subunit. This Saccharum officinarum (Sugarcane) protein is Small ribosomal subunit protein uS8c (rps8).